The primary structure comprises 148 residues: uncharacterized protein (148 aa).

Residues 1-23 form the signal peptide; sequence MKALVAVSAVAVVALLGVSSAQA. The tract at residues 22–45 is disordered; it reads QADPEADPGAGEANYGGPPSSPRL.

This sequence to M.leprae ML2452.

This is an uncharacterized protein from Mycobacterium bovis (strain ATCC BAA-935 / AF2122/97).